The sequence spans 860 residues: GAS2-like protein 2 (860 aa).

A compositionally biased stretch (basic residues) spans 1–12 (MSQHVGHGRRPR). Residues 1-22 (MSQHVGHGRRPRTPGPPVRSIR) form a disordered region. Residues 32–159 (EAMKEDLAEW…CLLELGRRAW (128 aa)) enclose the Calponin-homology (CH) domain. The GAR domain maps to 201–273 (CHFHNLDQMV…HYLDKHDPCR (73 aa)). 5 disordered regions span residues 281–459 (PGSF…SLAS), 473–574 (QLSE…RHTS), 697–743 (TTVR…KGKR), 758–781 (KLRP…IPKP), and 801–860 (ATLG…ESWV). Polar residues predominate over residues 301–316 (GPSQPQPTMTISRSQS). The segment covering 347-364 (PPVRARTLREDPLPRSQE) has biased composition (basic and acidic residues). Polar residues-rich tracts occupy residues 365–393 (KPTP…STLS) and 473–485 (QLSE…SSSP). The segment at 431–860 (QRLQIPEATS…PLSPEEESWV (430 aa)) is interaction with ADORA2A and GNAS. Positions 530–549 (NLDRSTHGHHSVEASGDHQT) are enriched in basic and acidic residues. The segment covering 724–733 (RSCSDPSSDK) has biased composition (polar residues). Basic residues predominate over residues 758–768 (KLRPRIRPRRD). A compositionally biased stretch (polar residues) spans 828–840 (SNISLESSIQPAE).

It belongs to the GAS2 family. In terms of assembly, interacts with ADORA2A (via its cytoplasmic C-terminal domain). Interacts with GNAS, GNAL, GNAQ, and GNA13. Interacts with MAPRE1. As to expression, expressed in tracheal epithelial cells (at protein level).

Its subcellular location is the cytoplasm. It is found in the cytoskeleton. It localises to the cell membrane. The protein localises to the stress fiber. The protein resides in the cilium basal body. Its function is as follows. Involved in the cross-linking of microtubules and microfilaments. Regulates microtubule dynamics and stability by interacting with microtubule plus-end tracking proteins, such as MAPRE1, to regulate microtubule growth along actin stress fibers. Enhances ADORA2-mediated adenylyl cyclase activation by acting as a scaffold to recruit trimeric G-protein complexes to ADORA2A. Regulates ciliary orientation and performance in cells located in the airway. This Mus musculus (Mouse) protein is GAS2-like protein 2 (Gas2l2).